The chain runs to 226 residues: CRISPR-associated endonuclease Cas3-HD (226 aa).

In terms of domain architecture, HD Cas3-type spans 9–204 (GRDCLQTYED…HVLTVCDNWG (196 aa)). Positions 56, 74, 101, and 102 each coordinate Mg(2+).

The protein belongs to the CRISPR-associated nuclease Cas3-HD family. As to quaternary structure, monomer. Can form a Cascade complex with Csa5, Cas7, Cas5a, Cas3 and Cas8a2. Mg(2+) is required as a cofactor.

Functionally, CRISPR (clustered regularly interspaced short palindromic repeat), is an adaptive immune system that provides protection against mobile genetic elements (viruses, transposable elements and conjugative plasmids). CRISPR clusters contain sequences complementary to antecedent mobile elements and target invading nucleic acids. CRISPR clusters are transcribed and processed into CRISPR RNA (crRNA). Cas3 plus Cascade participate in CRISPR interference, the third stage of CRISPR immunity. Acts as a ssDNA and ssRNA nuclease, probably with both exo- and endonuclease activities. Activity is higher for DNA than RNA. This is CRISPR-associated endonuclease Cas3-HD (cas3') from Thermoproteus tenax (strain ATCC 35583 / DSM 2078 / JCM 9277 / NBRC 100435 / Kra 1).